The chain runs to 70 residues: Large ribosomal subunit protein uL29 (70 aa).

This sequence belongs to the universal ribosomal protein uL29 family.

The protein is Large ribosomal subunit protein uL29 (rpl29) of Methanocaldococcus jannaschii (strain ATCC 43067 / DSM 2661 / JAL-1 / JCM 10045 / NBRC 100440) (Methanococcus jannaschii).